The following is a 485-amino-acid chain: NADH-quinone oxidoreductase subunit N (485 aa).

14 consecutive transmembrane segments (helical) span residues 8–28 (LIAL…MLSI), 35–55 (FLNA…LWFV), 71–91 (GFAM…CTFA), 105–125 (FYLL…ANHL), 127–147 (SLFL…GYAF), 159–179 (YTIL…LVYA), 203–223 (LLAG…LVPF), 235–255 (PAPV…GVVM), 271–291 (VVLA…ALSQ), 297–317 (LLGY…IALQ), 326–346 (VGVY…VVSL), 373–393 (AAVM…LGFI), 408–430 (WWLV…RVAV), and 455–475 (IVVL…QPLI).

The protein belongs to the complex I subunit 2 family. In terms of assembly, NDH-1 is composed of 13 different subunits. Subunits NuoA, H, J, K, L, M, N constitute the membrane sector of the complex.

It localises to the cell inner membrane. It catalyses the reaction a quinone + NADH + 5 H(+)(in) = a quinol + NAD(+) + 4 H(+)(out). Its function is as follows. NDH-1 shuttles electrons from NADH, via FMN and iron-sulfur (Fe-S) centers, to quinones in the respiratory chain. The immediate electron acceptor for the enzyme in this species is believed to be ubiquinone. Couples the redox reaction to proton translocation (for every two electrons transferred, four hydrogen ions are translocated across the cytoplasmic membrane), and thus conserves the redox energy in a proton gradient. This chain is NADH-quinone oxidoreductase subunit N, found in Shigella sonnei (strain Ss046).